Reading from the N-terminus, the 598-residue chain is ANEQDHCAAPRGDNASLEATFVKRCCHCCLLGRAAQAQGQSCEYNLMVGYQCGQVFRACCVKSQETGDLDVRSLQETDKITEVEEEQEDPYLNDRCRGGGPCKQQCRDTGDEVVCSCFVGYQLLSDGVSCEDVNECITGSHSCRLGESCINTVGSFRCQRDSSCGTGYELTEDNSCKDIDQCESGIHNCLPDFICQNTLGSFRCRPKLQCKNGFIQDALANCIDINECLSIVSAPCPTGHTCINTEGSYTQKNVPNCGRGYHLNEEGTRCDVNECAPPAEPCGKGHRCVNSPGSFRCECKTGYYFDGISRMCVDVNECQRYPGRLCGHKCENTLGSYVCSCSVGFRLSVDGRSCEDINECSSSPCSQECANVYGSYQCYCRRGYQLSDVDGVTCEDIDECALPTGGHICSYRCINIPGSFQCSCPASGYRLAPNGRNCQDIDECVTGIHNCSINETCFNIQGGFRCLAFECPENYRRSAATRCERLPCHENRECSKLPLRITYYHLSFPTNIQAPAVVFRMGPSSAVPGDSMQLAITGGNEEGFFTTRKVSPHSGVVALTKPVPEPRDLLLTVKMDLYRHGTVSSFVAKLFIFVSAEL.

31 disulfide bridges follow: A1–C25, C7–C26, C28–C52, C29–C59, C42–C60, C96–C106, C102–C115, C117–C130, C136–C149, C143–C158, C164–C176, C182–C195, C189–C204, C210–C222, C228–C242, C257–C270, C275–C288, C282–C297, C299–C312, C318–C330, C326–C339, C341–C354, C360–C369, C365–C378, C380–C394, C400–C413, C409–C422, C424–C438, C444–C457, C451–C466, and C471–C483. Anaphylatoxin-like domains follow at residues 1-27 (ANEQDHCAAPRGDNASLEATFVKRCCH) and 28-60 (CCLLGRAAQAQGQSCEYNLMVGYQCGQVFRACC). N14 carries N-linked (GlcNAc...) asparagine glycosylation. The EGF-like 1 domain maps to 92-131 (LNDRCRGGGPCKQQCRDTGDEVVCSCFVGYQLLSDGVSCE). Residues 132-177 (DVNECITGSHSCRLGESCINTVGSFRCQRDSSCGTGYELTEDNSCK) form the EGF-like 2; calcium-binding domain. The EGF-like 3; calcium-binding domain occupies 178–223 (DIDQCESGIHNCLPDFICQNTLGSFRCRPKLQCKNGFIQDALANCI). The EGF-like 4; calcium-binding domain maps to 224–270 (DINECLSIVSAPCPTGHTCINTEGSYTQKNVPNCGRGYHLNEEGTRC). The EGF-like 5; calcium-binding domain occupies 271–313 (DVNECAPPAEPCGKGHRCVNSPGSFRCECKTGYYFDGISRMCV). The interval 271–355 (DVNECAPPAE…RLSVDGRSCE (85 aa)) is self-association and FN1-binding. In terms of domain architecture, EGF-like 6; calcium-binding spans 314-355 (DVNECQRYPGRLCGHKCENTLGSYVCSCSVGFRLSVDGRSCE). The 40-residue stretch at 356 to 395 (DINECSSSPCSQECANVYGSYQCYCRRGYQLSDVDGVTCE) folds into the EGF-like 7; calcium-binding domain. The EGF-like 8; calcium-binding domain maps to 396–439 (DIDECALPTGGHICSYRCINIPGSFQCSCPASGYRLAPNGRNCQ). The region spanning 440–484 (DIDECVTGIHNCSINETCFNIQGGFRCLAFECPENYRRSAATRCE) is the EGF-like 9; calcium-binding domain. N-linked (GlcNAc...) asparagine glycans are attached at residues N450 and N454.

Belongs to the fibulin family. In terms of assembly, homomultimerizes and interacts with various extracellular matrix components. Interacts with FBLN7. Interacts with the mature/soluble form of DTR. Interacts with CCN3.

The protein localises to the secreted. The protein resides in the extracellular space. It is found in the extracellular matrix. In terms of biological role, incorporated into fibronectin-containing matrix fibers. May play a role in cell adhesion and migration along protein fibers within the extracellular matrix (ECM). Could be important for certain developmental processes and contribute to the supramolecular organization of ECM architecture, in particular to those of basement membranes. May serve to anchor the mature/soluble form of DTR to its fibers as it migrates through the extracellular matrix. The direct physical association with DTR may be useful in such tissue developmental processes as wound healing. The polypeptide is Fibulin-1 (FBLN1) (Chlorocebus aethiops (Green monkey)).